The sequence spans 203 residues: MSVEEKKRRLEELKDQNVVLGLAIQRSRLSVKRLKLEYGVLLERLESRIELDPELNCEDPLPTLASFKQELLTKPFRKSKTKRHKVKERDPNMPKRPTNAYLLYCEMNKERIRQNGSLDVTRDLAEGWKNLNEQDRKPYYKLYSEDRERYQMEMEIYNKKISNIDADDDKEENEQKIKNNEEGSSTKVADSKGGEDGSLVSSN.

An N-acetylserine modification is found at Ser-2. 2 disordered regions span residues 78–97 (KSKTKRHKVKERDPNMPKRP) and 161–203 (ISNI…VSSN). Residues 94–158 (PKRPTNAYLL…RYQMEMEIYN (65 aa)) constitute a DNA-binding region (HMG box).

Component of the chromatin-remodeling INO80 complex, at least composed of ARP4, ARP5, ARP8, RVB1, RVB2, TAF14, NHP10, IES1, IES3, IES4, IES6, ACT1, IES2, IES5 and INO80.

Its subcellular location is the nucleus. Functionally, probably involved in transcription regulation via its interaction with the INO80 complex, a chromatin remodeling complex. This Saccharomyces cerevisiae (strain ATCC 204508 / S288c) (Baker's yeast) protein is Non-histone protein 10 (NHP10).